The following is a 442-amino-acid chain: Probable glycine dehydrogenase (decarboxylating) subunit 1 (442 aa).

The protein belongs to the GcvP family. N-terminal subunit subfamily. As to quaternary structure, the glycine cleavage system is composed of four proteins: P, T, L and H. In this organism, the P 'protein' is a heterodimer of two subunits.

The catalysed reaction is N(6)-[(R)-lipoyl]-L-lysyl-[glycine-cleavage complex H protein] + glycine + H(+) = N(6)-[(R)-S(8)-aminomethyldihydrolipoyl]-L-lysyl-[glycine-cleavage complex H protein] + CO2. In terms of biological role, the glycine cleavage system catalyzes the degradation of glycine. The P protein binds the alpha-amino group of glycine through its pyridoxal phosphate cofactor; CO(2) is released and the remaining methylamine moiety is then transferred to the lipoamide cofactor of the H protein. In Phenylobacterium zucineum (strain HLK1), this protein is Probable glycine dehydrogenase (decarboxylating) subunit 1.